The following is a 285-amino-acid chain: Aquaporin-6 (285 aa).

A run of 3 helical transmembrane segments spans residues 36–56 (IFWK…VFSC), 76–96 (YCFK…ALLL), and 105–125 (ISLV…CYYG). The NPA 1 signature appears at 86 to 88 (NPV). Asparagine 128 is a glycosylation site (N-linked (GlcNAc...) asparagine). Helical transmembrane passes span 143 to 163 (VSPA…ILTM) and 177 to 197 (GDSN…SGMA). Residues 206–208 (NPM) carry the NPA 2 motif. Residues 225-245 (YIYWIGPIFGCLLAVFTFDYT) form a helical membrane-spanning segment.

The protein belongs to the MIP/aquaporin (TC 1.A.8) family.

It is found in the cell membrane. In terms of biological role, probable water-specific aquaporin that may modulate the water content and osmolytes during anhydrobiosis. The chain is Aquaporin-6 from Milnesium tardigradum (Water bear).